Here is a 1097-residue protein sequence, read N- to C-terminus: MSSSAIQVAKTVTYLPDLVEVQRASFKWFLDKGLIEELESFSPITDYTGKLELHFVGSEYRLKRPRHDVEEAKRRDATFASQMYVTCRLVNKETGEIKEQEVFIGELPLMTERGTFIINGAERVIVNQIVRSPGVYFKDEQDKNGRRTYNASVIPNRGAWLKFETDKNDLLHVRVDKTRKINAHVLMRAMGLSDNDVVDKLRHPEYYKKSIEAANDEGISSEDQALLELYKKLRPGEPPSVSGGQQLLQTRFFDPKRYDLGRVGRYKINKKLRLTIPDSVRTLTHEDVLSTLDYLINLELDVGGASLDDIDHLGNRRVRSVGELLQNQVRVGLNRLERIIKERMTVGETDSLTPAQLVNPKPLVAAIKEFFGSSQLSQFMDQTNPLAELTHKRRISALGPGGLTRERAGFAVRDIHPSHYGRLCPIETPEGPNAGLINSLATHARVNEYGFIETPFWRVENGVVQKSGDPIYLSADLEDECRVAPGDVATDADGQILAELIPVRYRQDFEKVPPEQVDYVQLSPVQVISVATSLIPFLEHDDANRALMGSNMQRQAVPLLRPERPLVGTGLETQVARDSGMVPISRVNGTVTFVDATAIVVRDEEGYDHTHFLQKYQRSNQDTCLNQRPIVRQGDPVIIGQVLADGSACEGGEIALGQNVLIAYMPWEGYNYEDAILVSERLVNDDLYTSVHIEKYEIEARQTKLGPEEITREIPNVAEESLGNLDEMGIIRIGAFVESGDILVGKVTPKGESDQPPEEKLLRAIFGEKARDVRDNSLRVPSTERGRVVDVRIYTREQGDELPPGANMVVRVYVAQRRKIQVGDKMAGRHGNKGIISRILPREDMPYLPDGTPVDICLNPLGVPSRMNVGQVFELLMGWAAANLDCRVKIVPFDEMYGPEKSQQTVQAYLKEAASQPGKDWIYNPEDPGKLLLRDGRTGEPFDQPVAVGYSHFLKLVHLVDDKIHARSTGPYSLVTQQPLGGKAQQGGQRLGEMEVWALEAYGAAYTLQELLTVKSDDMQGRNEALNAIVKGKPIPRPGTPESFKVLMRELQSLGLDIAVFTDEGKEVDLMQDVNPRRSTPSRPTYESLGVADYDED.

A disordered region spans residues 1073-1097; sequence DVNPRRSTPSRPTYESLGVADYDED.

The protein belongs to the RNA polymerase beta chain family. As to quaternary structure, in cyanobacteria the RNAP catalytic core is composed of 2 alpha, 1 beta, 1 beta', 1 gamma and 1 omega subunit. When a sigma factor is associated with the core the holoenzyme is formed, which can initiate transcription.

The enzyme catalyses RNA(n) + a ribonucleoside 5'-triphosphate = RNA(n+1) + diphosphate. In terms of biological role, DNA-dependent RNA polymerase catalyzes the transcription of DNA into RNA using the four ribonucleoside triphosphates as substrates. The sequence is that of DNA-directed RNA polymerase subunit beta from Synechococcus sp. (strain CC9311).